A 445-amino-acid polypeptide reads, in one-letter code: Vacuolar fusion protein CCZ1 homolog (445 aa).

The protein belongs to the CCZ1 family.

This is Vacuolar fusion protein CCZ1 homolog from Dictyostelium discoideum (Social amoeba).